Consider the following 175-residue polypeptide: NADH-ubiquinone oxidoreductase chain 6 (175 aa).

5 helical membrane-spanning segments follow: residues 1-21 (MTMY…VGFS), 25-45 (SPIY…GIVL), 47-67 (FGGS…MLVV), 88-108 (TVFG…YYAL), and 149-169 (YGTW…VVIM).

Belongs to the complex I subunit 6 family. In terms of assembly, core subunit of respiratory chain NADH dehydrogenase (Complex I) which is composed of 45 different subunits.

It localises to the mitochondrion inner membrane. It carries out the reaction a ubiquinone + NADH + 5 H(+)(in) = a ubiquinol + NAD(+) + 4 H(+)(out). Its function is as follows. Core subunit of the mitochondrial membrane respiratory chain NADH dehydrogenase (Complex I) which catalyzes electron transfer from NADH through the respiratory chain, using ubiquinone as an electron acceptor. Essential for the catalytic activity and assembly of complex I. This Sus scrofa (Pig) protein is NADH-ubiquinone oxidoreductase chain 6 (MT-ND6).